The following is a 132-amino-acid chain: Prefoldin subunit alpha (132 aa).

This sequence belongs to the prefoldin subunit alpha family. As to quaternary structure, heterohexamer of two alpha and four beta subunits.

It localises to the cytoplasm. Molecular chaperone capable of stabilizing a range of proteins. Seems to fulfill an ATP-independent, HSP70-like function in archaeal de novo protein folding. The sequence is that of Prefoldin subunit alpha (pfdA) from Pyrobaculum aerophilum (strain ATCC 51768 / DSM 7523 / JCM 9630 / CIP 104966 / NBRC 100827 / IM2).